Consider the following 85-residue polypeptide: U4-theraphotoxin-Hhn1z (85 aa).

A signal peptide spans 1-22; it reads MKMTLIAILTCAAVLVLHTTAA. A propeptide spanning residues 23-48 is cleaved from the precursor; the sequence is EELEAESQLMEVGMPDTELEAVDEER. 3 disulfides stabilise this stretch: Cys52-Cys66, Cys56-Cys77, and Cys71-Cys82.

Belongs to the neurotoxin 12 (Hwtx-2) family. 02 (Hwtx-2) subfamily. Expressed by the venom gland.

Its subcellular location is the secreted. Its function is as follows. Postsynaptic neurotoxin. The chain is U4-theraphotoxin-Hhn1z from Cyriopagopus hainanus (Chinese bird spider).